We begin with the raw amino-acid sequence, 103 residues long: Large ribosomal subunit protein bL21 (103 aa).

Belongs to the bacterial ribosomal protein bL21 family. In terms of assembly, part of the 50S ribosomal subunit. Contacts protein L20.

Functionally, this protein binds to 23S rRNA in the presence of protein L20. This is Large ribosomal subunit protein bL21 from Acidithiobacillus ferrooxidans (strain ATCC 23270 / DSM 14882 / CIP 104768 / NCIMB 8455) (Ferrobacillus ferrooxidans (strain ATCC 23270)).